The chain runs to 127 residues: Small ribosomal subunit protein uS11 (127 aa).

The protein belongs to the universal ribosomal protein uS11 family. Part of the 30S ribosomal subunit. Interacts with proteins S7 and S18. Binds to IF-3.

In terms of biological role, located on the platform of the 30S subunit, it bridges several disparate RNA helices of the 16S rRNA. Forms part of the Shine-Dalgarno cleft in the 70S ribosome. The sequence is that of Small ribosomal subunit protein uS11 from Chlorobium phaeobacteroides (strain DSM 266 / SMG 266 / 2430).